We begin with the raw amino-acid sequence, 496 residues long: Cytochrome P450 71D181 (496 aa).

A helical; Signal-anchor for type II membrane protein transmembrane segment spans residues 1–21 (MDISILWVAIILVISSYFIFM). Residue Cys435 participates in heme binding. Positions 471–496 (MSETPGLSGPRKNPLIMVPTIHNPTS) are disordered.

This sequence belongs to the cytochrome P450 family. It depends on heme as a cofactor.

It is found in the membrane. It carries out the reaction gamma-terpinene + 2 reduced [NADPH--hemoprotein reductase] + 2 O2 = carvacrol + 2 oxidized [NADPH--hemoprotein reductase] + 3 H2O + 2 H(+). The catalysed reaction is (4S)-limonene + reduced [NADPH--hemoprotein reductase] + O2 = (1S,5R)-carveol + oxidized [NADPH--hemoprotein reductase] + H2O + H(+). The enzyme catalyses (4R)-limonene + reduced [NADPH--hemoprotein reductase] + O2 = (1R,5S)-carveol + oxidized [NADPH--hemoprotein reductase] + H2O + H(+). It catalyses the reaction alpha-terpinene + 2 reduced [NADPH--hemoprotein reductase] + 2 O2 = carvacrol + 2 oxidized [NADPH--hemoprotein reductase] + 3 H2O + 2 H(+). Its pathway is secondary metabolite biosynthesis; terpenoid biosynthesis. Its function is as follows. Involved in the biosynthesis of phenolic monoterpenes natural products thymol and carvacrol which have a broad range of biological activities acting as antimicrobial compounds, insecticides, antioxidants and pharmaceutical agents. Catalyzes the C2-hydroxylation of gamma-terpinene and alpha-terpinene to produce carvacrol. Also mediates the C6-hydroxylation of (4S)-limonene and (4R)-limonene to form carveol. This chain is Cytochrome P450 71D181, found in Thymus vulgaris (Thyme).